A 186-amino-acid polypeptide reads, in one-letter code: ATP synthase subunit b, chloroplastic (186 aa).

A helical transmembrane segment spans residues 27–43 (IFETNILNLAVVLGILL).

The protein belongs to the ATPase B chain family. In terms of assembly, F-type ATPases have 2 components, F(1) - the catalytic core - and F(0) - the membrane proton channel. F(1) has five subunits: alpha(3), beta(3), gamma(1), delta(1), epsilon(1). F(0) has four main subunits: a(1), b(1), b'(1) and c(10-14). The alpha and beta chains form an alternating ring which encloses part of the gamma chain. F(1) is attached to F(0) by a central stalk formed by the gamma and epsilon chains, while a peripheral stalk is formed by the delta, b and b' chains.

The protein localises to the plastid. It localises to the chloroplast thylakoid membrane. Its function is as follows. F(1)F(0) ATP synthase produces ATP from ADP in the presence of a proton or sodium gradient. F-type ATPases consist of two structural domains, F(1) containing the extramembraneous catalytic core and F(0) containing the membrane proton channel, linked together by a central stalk and a peripheral stalk. During catalysis, ATP synthesis in the catalytic domain of F(1) is coupled via a rotary mechanism of the central stalk subunits to proton translocation. In terms of biological role, component of the F(0) channel, it forms part of the peripheral stalk, linking F(1) to F(0). The chain is ATP synthase subunit b, chloroplastic from Mesostigma viride (Green alga).